Consider the following 280-residue polypeptide: Phosphatidylglycerol--prolipoprotein diacylglyceryl transferase (280 aa).

4 consecutive transmembrane segments (helical) span residues 26–46, 71–91, 106–126, and 132–152; these read LAIH…WFYA, FILW…ILFY, IWNG…AMIL, and GIPV…GLLF. Arg154 serves as a coordination point for a 1,2-diacyl-sn-glycero-3-phospho-(1'-sn-glycerol). Helical transmembrane passes span 193-213, 217-237, and 251-271; these read GLEG…FKAL, GTVT…VEFF, and WLTM…WAVL.

It belongs to the Lgt family.

It is found in the cell inner membrane. The catalysed reaction is L-cysteinyl-[prolipoprotein] + a 1,2-diacyl-sn-glycero-3-phospho-(1'-sn-glycerol) = an S-1,2-diacyl-sn-glyceryl-L-cysteinyl-[prolipoprotein] + sn-glycerol 1-phosphate + H(+). It functions in the pathway protein modification; lipoprotein biosynthesis (diacylglyceryl transfer). In terms of biological role, catalyzes the transfer of the diacylglyceryl group from phosphatidylglycerol to the sulfhydryl group of the N-terminal cysteine of a prolipoprotein, the first step in the formation of mature lipoproteins. This Agrobacterium fabrum (strain C58 / ATCC 33970) (Agrobacterium tumefaciens (strain C58)) protein is Phosphatidylglycerol--prolipoprotein diacylglyceryl transferase.